We begin with the raw amino-acid sequence, 122 residues long: Small ribosomal subunit protein uS13 (122 aa).

The interval 94-122 is disordered; that stretch reads SLPVRGQRTKTNARTRKVHVSRSKNSRGK.

The protein belongs to the universal ribosomal protein uS13 family. In terms of assembly, part of the 30S ribosomal subunit. Forms a loose heterodimer with protein S19. Forms two bridges to the 50S subunit in the 70S ribosome.

Located at the top of the head of the 30S subunit, it contacts several helices of the 16S rRNA. In the 70S ribosome it contacts the 23S rRNA (bridge B1a) and protein L5 of the 50S subunit (bridge B1b), connecting the 2 subunits; these bridges are implicated in subunit movement. Contacts the tRNAs in the A and P-sites. This chain is Small ribosomal subunit protein uS13, found in Haemophilus influenzae (strain ATCC 51907 / DSM 11121 / KW20 / Rd).